A 217-amino-acid polypeptide reads, in one-letter code: Adenylate kinase (217 aa).

Residue 11–16 (GAGKGT) participates in ATP binding. The interval 31-60 (STGDMFREAMANETPVGLEAKSYIDKGDLV) is NMP. AMP-binding positions include Thr32, Arg37, 58 to 60 (DLV), 86 to 89 (GFPR), and Gln93. The segment at 127-165 (ARYICKNCGATYNKISNPTKVEGTCDRCGGHEFFQREDD) is LID. Position 128 (Arg128) interacts with ATP. Cys131 and Cys134 together coordinate Zn(2+). 137–138 (TY) provides a ligand contact to ATP. 2 residues coordinate Zn(2+): Cys151 and Cys154. Residues Arg162 and Arg173 each coordinate AMP. Gln201 contacts ATP.

Belongs to the adenylate kinase family. In terms of assembly, monomer.

Its subcellular location is the cytoplasm. The enzyme catalyses AMP + ATP = 2 ADP. The protein operates within purine metabolism; AMP biosynthesis via salvage pathway; AMP from ADP: step 1/1. In terms of biological role, catalyzes the reversible transfer of the terminal phosphate group between ATP and AMP. Plays an important role in cellular energy homeostasis and in adenine nucleotide metabolism. The protein is Adenylate kinase of Lactobacillus gasseri (strain ATCC 33323 / DSM 20243 / BCRC 14619 / CIP 102991 / JCM 1131 / KCTC 3163 / NCIMB 11718 / NCTC 13722 / AM63).